Here is a 137-residue protein sequence, read N- to C-terminus: Protein PsiE homolog (137 aa).

4 consecutive transmembrane segments (helical) span residues 13–35 (ILLR…AFLI), 55–77 (YYMT…IVKY), 84–103 (FPLR…FIIV), and 107–129 (SATS…FLAN).

It belongs to the PsiE family.

The protein localises to the cell membrane. The chain is Protein PsiE homolog from Listeria monocytogenes serotype 4b (strain F2365).